Reading from the N-terminus, the 1072-residue chain is DNA-directed RNA polymerase subunit beta (1072 aa).

It belongs to the RNA polymerase beta chain family. In plastids the minimal PEP RNA polymerase catalytic core is composed of four subunits: alpha, beta, beta', and beta''. When a (nuclear-encoded) sigma factor is associated with the core the holoenzyme is formed, which can initiate transcription.

It localises to the plastid. It is found in the chloroplast. It catalyses the reaction RNA(n) + a ribonucleoside 5'-triphosphate = RNA(n+1) + diphosphate. In terms of biological role, DNA-dependent RNA polymerase catalyzes the transcription of DNA into RNA using the four ribonucleoside triphosphates as substrates. This is DNA-directed RNA polymerase subunit beta from Oenothera elata subsp. hookeri (Hooker's evening primrose).